The sequence spans 676 residues: Probable metal-nicotianamine transporter YSL6 (676 aa).

13 helical membrane-spanning segments follow: residues 38-58, 62-82, 110-130, 154-174, 276-296, 321-341, 392-412, 413-433, 452-472, 510-530, 561-581, 604-624, and 639-659; these read ITIR…IITH, LTVG…FFFV, CVVA…LIAM, GLWW…FSLV, IVNC…WPFV, VFIA…KIIA, FAIA…PIIF, PPLK…LAFC, IGLF…AGLA, VGTA…WTAF, LPKH…IVNL, FYIG…LFVW, and VASG…ILSI.

Belongs to the YSL (TC 2.A.67.2) family.

The protein localises to the membrane. Its function is as follows. May be involved in the transport of nicotianamine-chelated metals. This Arabidopsis thaliana (Mouse-ear cress) protein is Probable metal-nicotianamine transporter YSL6 (YSL6).